Here is a 302-residue protein sequence, read N- to C-terminus: Putative gluconeogenesis factor (302 aa).

It belongs to the gluconeogenesis factor family.

The protein localises to the cytoplasm. Required for morphogenesis under gluconeogenic growth conditions. This is Putative gluconeogenesis factor (ybhK) from Salmonella typhimurium (strain LT2 / SGSC1412 / ATCC 700720).